A 332-amino-acid chain; its full sequence is Mitoferrin-1 (332 aa).

3 Solcar repeats span residues 31–119 (ASLG…IKRS), 129–213 (NSHI…MQEH), and 220–314 (YRPE…FKYF). 6 helical membrane passes run 33–52 (LGTHMTAGAVAGILEHTVMY), 94–113 (GLNITVLGAGPAHALYFACY), 131–150 (HIANGVAGSVATVLHDAVMN), 188–207 (SYSTQLTMNIPFQAVHFITY), 222–241 (PETHIISGAAAGAVSAAVTT), and 289–308 (GIQARVIYQMPSTAIAWSVY).

It belongs to the mitochondrial carrier (TC 2.A.29) family. Highly expressed in hematopoietic organs, Expressed in the intermediate cell mass (ICM), a tissue equivalent to the mammalian extraembryonic yolk-sac blood islands. Colocalizes with gata1.

The protein resides in the mitochondrion inner membrane. The catalysed reaction is Fe(2+)(in) = Fe(2+)(out). Its function is as follows. Mitochondrial iron transporter that specifically mediates iron uptake in developing erythroid cells, thereby playing an essential role in heme biosynthesis. In Danio rerio (Zebrafish), this protein is Mitoferrin-1 (slc25a37).